The following is a 465-amino-acid chain: Sensor histidine kinase ZraS (465 aa).

Residues 1 to 14 (MRFMQRSKDSLAKW) lie on the Cytoplasmic side of the membrane. Residues 15 to 35 (LSAILPVVIVGLVGLFAVTVI) form a helical membrane-spanning segment. The Periplasmic segment spans residues 36 to 201 (RDYGRASEAD…ATQSGEKRNT (166 aa)). The chain crosses the membrane as a helical span at residues 202–222 (LIILFALATVLLASVLSFFWY). Over 223-465 (RRYLRSRQLL…VNITRKDPQG (243 aa)) the chain is Cytoplasmic. Positions 251–458 (GVAHEIRNPL…TFTLWLPVNI (208 aa)) constitute a Histidine kinase domain. H254 is subject to Phosphohistidine; by autocatalysis.

In terms of processing, autophosphorylated.

The protein resides in the cell inner membrane. The catalysed reaction is ATP + protein L-histidine = ADP + protein N-phospho-L-histidine.. Activity of the ZraS/ZraR two-component system is repressed by the zinc-bound form of ZraP, which probably interacts with the periplasmic region of ZraS. Functionally, part of the Zra signaling pathway, an envelope stress response (ESR) system composed of the periplasmic accessory protein ZraP, the histidine kinase ZraS and the transcriptional regulator ZraR. The ZraPSR system contributes to antibiotic resistance and is important for membrane integrity in the presence of membrane-targeting biocides. ZraS is a member of the two-component regulatory system ZraS/ZraR. Functions as a membrane-associated sensor kinase that phosphorylates ZraR in response to high concentrations of Zn(2+) or Pb(2+) in the medium. Binds one zinc molecule with high affinity via its periplasmic domain, inducing a conformational change that is transmitted to the histidine kinase domain and leads to the activation of ZraR. The system has no direct role in zinc or copper resistance. This Escherichia coli (strain K12) protein is Sensor histidine kinase ZraS.